Consider the following 212-residue polypeptide: FMN-dependent NADH:quinone oxidoreductase (212 aa).

Residues S10, 16–18, and 98–101 each bind FMN; these read SFS and MWNF.

Belongs to the azoreductase type 1 family. Homodimer. Requires FMN as cofactor.

The enzyme catalyses 2 a quinone + NADH + H(+) = 2 a 1,4-benzosemiquinone + NAD(+). It catalyses the reaction N,N-dimethyl-1,4-phenylenediamine + anthranilate + 2 NAD(+) = 2-(4-dimethylaminophenyl)diazenylbenzoate + 2 NADH + 2 H(+). In terms of biological role, quinone reductase that provides resistance to thiol-specific stress caused by electrophilic quinones. Its function is as follows. Also exhibits azoreductase activity. Catalyzes the reductive cleavage of the azo bond in aromatic azo compounds to the corresponding amines. The protein is FMN-dependent NADH:quinone oxidoreductase of Desulfotalea psychrophila (strain LSv54 / DSM 12343).